The sequence spans 227 residues: Transmembrane emp24 domain-containing protein 1 (227 aa).

An N-terminal signal peptide occupies residues 1–23; that stretch reads MMAAGAALALALWLLMPPVEVGG. The Extracellular segment spans residues 24-194; sequence AGPPPIQDGE…LQEGNLERVN (171 aa). The 83-residue stretch at 43–125 folds into the GOLD domain; that stretch reads KQCFYQSAPA…EKLVFFELIF (83 aa). The stretch at 145–170 forms a coiled coil; the sequence is EMLDVKMEDIKESIETMRTRLERSIQ. Residues 195–215 form a helical membrane-spanning segment; sequence FWSAVNVAVLLLVAVLQVCTL. The Cytoplasmic portion of the chain corresponds to 216-227; it reads KRFFQDKRPVPT. The COPII vesicle coat-binding motif lies at 218–219; sequence FF. The short motif at 218 to 227 is the COPI vesicle coat-binding element; the sequence is FFQDKRPVPT.

The protein belongs to the EMP24/GP25L family. In terms of assembly, homodimer in endoplasmic reticulum, endoplasmic reticulum-Golgi intermediate compartment and cis-Golgi network. Interacts with IL1RL1. Interacts with RNF26; this interaction is important to modulate innate immune signaling through the cGAS-STING pathway. Widely expressed.

It localises to the cell membrane. It is found in the endoplasmic reticulum membrane. The protein localises to the golgi apparatus. Its subcellular location is the cis-Golgi network membrane. The protein resides in the endoplasmic reticulum-Golgi intermediate compartment membrane. Potential role in vesicular protein trafficking, mainly in the early secretory pathway. May act as a cargo receptor at the lumenal side for incorporation of secretory cargo molecules into transport vesicles and may be involved in vesicle coat formation at the cytoplasmic side. Plays a positive role in IL-33-mediated IL-8 and IL-6 production by interacting with interleukin-33 receptor IL1RL1. Also plays a role in the modulation of innate immune signaling through the cGAS-STING pathway by interacting with RNF26. The polypeptide is Transmembrane emp24 domain-containing protein 1 (TMED1) (Homo sapiens (Human)).